The primary structure comprises 224 residues: Glutathione peroxidase 3 (224 aa).

The first 18 residues, 1–18, serve as a signal peptide directing secretion; it reads MAPGSVLSLAVALATIIG. Asn-38 carries an N-linked (GlcNAc...) asparagine glycan. Residue Cys-73 is part of the active site.

It belongs to the glutathione peroxidase family.

It localises to the secreted. Its subcellular location is the extracellular space. The enzyme catalyses 2 glutathione + H2O2 = glutathione disulfide + 2 H2O. The sequence is that of Glutathione peroxidase 3 (gpx-3) from Caenorhabditis elegans.